The chain runs to 255 residues: Fe(3+) dicitrate transport ATP-binding protein FecE (255 aa).

An ABC transporter domain is found at 3–238 (LRTENLTVSY…GLLRTVFSVE (236 aa)). 35 to 42 (GPNGCGKS) is a binding site for ATP.

The protein belongs to the ABC transporter superfamily. As to quaternary structure, the complex is composed of two ATP-binding proteins (FecE), two transmembrane proteins (FecC and FecD) and a solute-binding protein (FecB).

The protein resides in the cell inner membrane. It carries out the reaction iron(III) dicitrate(out) + ATP + H2O = iron(III) dicitrate(in) + ADP + phosphate + H(+). Functionally, part of the ABC transporter complex FecBCDE involved in citrate-dependent Fe(3+) uptake. Binds ATP. Probably responsible for energy coupling to the transport system. In Escherichia coli (strain K12), this protein is Fe(3+) dicitrate transport ATP-binding protein FecE.